The chain runs to 157 residues: Small ribosomal subunit protein uS7 (157 aa).

Belongs to the universal ribosomal protein uS7 family. Part of the 30S ribosomal subunit. Contacts proteins S9 and S11.

Its function is as follows. One of the primary rRNA binding proteins, it binds directly to 16S rRNA where it nucleates assembly of the head domain of the 30S subunit. Is located at the subunit interface close to the decoding center, probably blocks exit of the E-site tRNA. The chain is Small ribosomal subunit protein uS7 from Stenotrophomonas maltophilia (strain R551-3).